Reading from the N-terminus, the 354-residue chain is Protein-arginine kinase (354 aa).

Residues 24 to 254 form the Phosphagen kinase C-terminal domain; that stretch reads IVLSSRIRLA…QQIIQQEKMA (231 aa). Residues 27–31, His92, Arg125, 176–180, and 207–212 each bind ATP; these read SSRIR, RASVM, and RGIYGE. The RDXXRA motif of the pArg binding pocket involved in allosteric regulation motif lies at 337–342; that stretch reads RDYRRA.

This sequence belongs to the ATP:guanido phosphotransferase family.

It catalyses the reaction L-arginyl-[protein] + ATP = N(omega)-phospho-L-arginyl-[protein] + ADP + H(+). Appears to be allosterically activated by the binding of pArg-containing polypeptides to the pArg-binding pocket localized in the C-terminal domain of McsB. In terms of biological role, catalyzes the specific phosphorylation of arginine residues in a large number of proteins. Is part of the bacterial stress response system. Protein arginine phosphorylation has a physiologically important role and is involved in the regulation of many critical cellular processes, such as protein homeostasis, motility, competence, and stringent and stress responses, by regulating gene expression and protein activity. The protein is Protein-arginine kinase of Bacillus cereus (strain ATCC 10987 / NRS 248).